The primary structure comprises 382 residues: V-set and immunoglobulin domain-containing protein 1 (382 aa).

The signal sequence occupies residues 1-21 (MGLTFWKVFLILNCLAGQVNG). The Ig-like V-type domain occupies 22–133 (VQVTIPDSFV…FFGKNQGTIS (112 aa)). The Extracellular segment spans residues 22 to 234 (VQVTIPDSFV…DLTTPYPGIG (213 aa)). Asn-32 is a glycosylation site (N-linked (GlcNAc...) asparagine). Disulfide bonds link Cys-43–Cys-116 and Cys-161–Cys-211. An Ig-like C2-type domain is found at 140-227 (PSKPFCSIQG…GNSSCEIDLT (88 aa)). 2 N-linked (GlcNAc...) asparagine glycosylation sites follow: Asn-200 and Asn-219. The chain crosses the membrane as a helical span at residues 235–255 (IIVGAFVGTLIGVIIIISVVW). Residues 256 to 382 (FVRRKVKAKG…FCDEEKVIKP (127 aa)) are Cytoplasmic-facing. A disordered region spans residues 266–382 (KERKRNSKTT…FCDEEKVIKP (117 aa)). Polar residues predominate over residues 273-285 (KTTTELEPMTKIN). Over residues 286–298 (QRTEGETMPREDA) the composition is skewed to basic and acidic residues. Residues 327–341 (EPEPALQPTVEPPSG) show a composition bias toward pro residues.

The protein resides in the membrane. The polypeptide is V-set and immunoglobulin domain-containing protein 1 (VSIG1) (Bos taurus (Bovine)).